The chain runs to 416 residues: Pentraxin fusion protein (416 aa).

The N-terminal stretch at 1-14 (MKSLLLFLKSQVFG) is a signal peptide. Asn-129 carries an N-linked (GlcNAc...) asparagine glycan. The segment at 184 to 206 (GTEASDSSESVDGTEAPASPESD) is disordered. The region spanning 220-416 (TNKSFMFPKE…YSMIGNVAEV (197 aa)) is the Pentraxin (PTX) domain. A glycan (N-linked (GlcNAc...) asparagine) is linked at Asn-221. Cys-251 and Cys-311 are disulfide-bonded. Residues Asp-275, Gln-353, Asp-354, and Gln-364 each coordinate Ca(2+).

It depends on Ca(2+) as a cofactor.

The protein is Pentraxin fusion protein (pxn1) of Xenopus laevis (African clawed frog).